A 122-amino-acid chain; its full sequence is Ribonuclease pancreatic (122 aa).

Over residues 1 to 16 the composition is skewed to basic and acidic residues; the sequence is ETPAEKFQRQHMDTEH. Positions 1–20 are disordered; the sequence is ETPAEKFQRQHMDTEHSTAS. Residues lysine 6 and arginine 9 each coordinate substrate. The active-site Proton acceptor is histidine 11. Cystine bridges form between cysteine 25–cysteine 83, cysteine 39–cysteine 94, cysteine 57–cysteine 109, and cysteine 64–cysteine 71. Residues 40 to 44, lysine 65, and arginine 84 contribute to the substrate site; that span reads KPLNT. Histidine 117 acts as the Proton donor in catalysis.

It belongs to the pancreatic ribonuclease family. As to quaternary structure, monomer. Interacts with and forms tight 1:1 complexes with RNH1. Dimerization of two such complexes may occur. Interaction with RNH1 inhibits this protein. Post-translationally, not glycosylated although the sequence N-V-T, a recognition site for carbohydrate attachment, is present. Pancreas.

The protein resides in the secreted. The catalysed reaction is an [RNA] containing cytidine + H2O = an [RNA]-3'-cytidine-3'-phosphate + a 5'-hydroxy-ribonucleotide-3'-[RNA].. It carries out the reaction an [RNA] containing uridine + H2O = an [RNA]-3'-uridine-3'-phosphate + a 5'-hydroxy-ribonucleotide-3'-[RNA].. Functionally, endonuclease that catalyzes the cleavage of RNA on the 3' side of pyrimidine nucleotides. Acts on single-stranded and double-stranded RNA. This Osphranter rufus (Red kangaroo) protein is Ribonuclease pancreatic (RNASE1).